A 520-amino-acid polypeptide reads, in one-letter code: Apolipoprotein N-acyltransferase (520 aa).

7 helical membrane-spanning segments follow: residues 12-32 (IFTY…FSPF), 33-53 (DYWG…KTAE), 58-78 (LWSA…WVHV), 93-113 (VLVL…AYLI), 122-142 (AMFP…FTGF), 168-188 (VTFF…VLLI), and 193-213 (WNVV…SAYS). The CN hydrolase domain maps to 232–479 (AQGNIEQNLK…ETTLTHKVAA (248 aa)). Glu-272 acts as the Proton acceptor in catalysis. Lys-338 is an active-site residue. Cys-390 functions as the Nucleophile in the catalytic mechanism. The chain crosses the membrane as a helical span at residues 484–504 (TPYAVFGNTAIYGLSLLLLLM).

It belongs to the CN hydrolase family. Apolipoprotein N-acyltransferase subfamily.

It is found in the cell inner membrane. The enzyme catalyses N-terminal S-1,2-diacyl-sn-glyceryl-L-cysteinyl-[lipoprotein] + a glycerophospholipid = N-acyl-S-1,2-diacyl-sn-glyceryl-L-cysteinyl-[lipoprotein] + a 2-acyl-sn-glycero-3-phospholipid + H(+). It participates in protein modification; lipoprotein biosynthesis (N-acyl transfer). Catalyzes the phospholipid dependent N-acylation of the N-terminal cysteine of apolipoprotein, the last step in lipoprotein maturation. The protein is Apolipoprotein N-acyltransferase of Pasteurella multocida (strain Pm70).